A 712-amino-acid chain; its full sequence is 1,4-alpha-glucan branching enzyme GlgB (712 aa).

Aspartate 397 serves as the catalytic Nucleophile. The active-site Proton donor is glutamate 450.

This sequence belongs to the glycosyl hydrolase 13 family. GlgB subfamily. Monomer.

It carries out the reaction Transfers a segment of a (1-&gt;4)-alpha-D-glucan chain to a primary hydroxy group in a similar glucan chain.. It participates in glycan biosynthesis; glycogen biosynthesis. Catalyzes the formation of the alpha-1,6-glucosidic linkages in glycogen by scission of a 1,4-alpha-linked oligosaccharide from growing alpha-1,4-glucan chains and the subsequent attachment of the oligosaccharide to the alpha-1,6 position. The polypeptide is 1,4-alpha-glucan branching enzyme GlgB (Bradyrhizobium sp. (strain BTAi1 / ATCC BAA-1182)).